A 342-amino-acid polypeptide reads, in one-letter code: Mitochondrial fission factor (342 aa).

The Cytoplasmic portion of the chain corresponds to 1 to 322 (MSKGTSSDTS…ENKERAKREM (322 aa)). Threonine 115 carries the phosphothreonine modification. Alanine 146 is modified (phosphoserine). Residue arginine 149 is modified to Phosphothreonine. Phosphoserine occurs at positions 151, 155, 157, and 172. Threonine 200 bears the Phosphothreonine mark. Phosphoserine occurs at positions 202, 229, 233, and 295. Positions 291–322 (VDAASLRRQIIKLNRRLQLLEEENKERAKREM) form a coiled coil. A helical; Anchor for type IV membrane protein transmembrane segment spans residues 323 to 340 (VMYSITVAFWLLNSWLWF). The Mitochondrial intermembrane portion of the chain corresponds to 341 to 342 (RR).

This sequence belongs to the Tango11 family. Homodimer. Interacts with DNM1L. Interacts with C11orf65/MFI; the interaction inhibits MFF interaction with DNM1L. In terms of tissue distribution, highly expressed in heart, kidney, liver, brain, muscle, and stomach.

Its subcellular location is the mitochondrion outer membrane. It localises to the peroxisome. The protein resides in the cytoplasmic vesicle. The protein localises to the secretory vesicle. It is found in the synaptic vesicle. In terms of biological role, plays a role in mitochondrial and peroxisomal fission. Promotes the recruitment and association of the fission mediator dynamin-related protein 1 (DNM1L) to the mitochondrial surface. May be involved in regulation of synaptic vesicle membrane dynamics by recruitment of DNM1L to clathrin-containing vesicles. The sequence is that of Mitochondrial fission factor (MFF) from Homo sapiens (Human).